Consider the following 79-residue polypeptide: Sec-independent protein translocase protein TatA (79 aa).

The helical transmembrane segment at 1–21 (MGGISIWQLLIVALIVVLLFG) threads the bilayer. The tract at residues 43 to 79 (MSSEEDKKALEDTEAAKTAQTTQQATEKKPESNKEQA) is disordered. The span at 46–57 (EEDKKALEDTEA) shows a compositional bias: basic and acidic residues. Low complexity predominate over residues 58-67 (AKTAQTTQQA). Positions 68–79 (TEKKPESNKEQA) are enriched in basic and acidic residues.

This sequence belongs to the TatA/E family. In terms of assembly, the Tat system comprises two distinct complexes: a TatABC complex, containing multiple copies of TatA, TatB and TatC subunits, and a separate TatA complex, containing only TatA subunits. Substrates initially bind to the TatABC complex, which probably triggers association of the separate TatA complex to form the active translocon.

It localises to the cell inner membrane. Part of the twin-arginine translocation (Tat) system that transports large folded proteins containing a characteristic twin-arginine motif in their signal peptide across membranes. TatA could form the protein-conducting channel of the Tat system. In Shewanella baltica (strain OS223), this protein is Sec-independent protein translocase protein TatA.